Consider the following 551-residue polypeptide: Cytochrome bc1 complex cytochrome b subunit (551 aa).

A helical membrane pass occupies residues Phe44–Leu64. The heme site is built by His113 and His127. Helical transmembrane passes span Ala117–Phe137, Trp145–Met165, and Val188–Ile208. Residues His215 and His230 each contribute to the heme site. 5 helical membrane-spanning segments follow: residues Ile216 to Phe236, Ser265 to Ile285, Pro334 to Leu354, Ile380 to Ile400, and Ile417 to Leu437. Residues Ala532–His551 are disordered.

The protein belongs to the cytochrome b family. In terms of assembly, the cytochrome bc1 complex is composed of a cytochrome b (QcrB), the Rieske iron-sulfur protein (QcrA) and a diheme cytochrome c (QcrC) subunit. It depends on heme as a cofactor.

The protein resides in the cell membrane. The enzyme catalyses a quinol + 2 Fe(III)-[cytochrome c](out) = a quinone + 2 Fe(II)-[cytochrome c](out) + 2 H(+)(out). Cytochrome b subunit of the cytochrome bc1 complex, an essential component of the respiratory electron transport chain required for ATP synthesis. The bc1 complex catalyzes the oxidation of ubiquinol and the reduction of cytochrome c in the respiratory chain. The bc1 complex operates through a Q-cycle mechanism that couples electron transfer to generation of the proton gradient that drives ATP synthesis. The cytochrome b subunit contains two ubiquinol reactive sites: the oxidation (QP) site and the reduction (QN) site. This chain is Cytochrome bc1 complex cytochrome b subunit (qcrB), found in Mycobacterium leprae (strain TN).